Consider the following 425-residue polypeptide: Serine--tRNA ligase (425 aa).

229–231 contributes to the L-serine binding site; sequence TAE. 260-262 provides a ligand contact to ATP; it reads RSE. An L-serine-binding site is contributed by Glu283. 347 to 350 lines the ATP pocket; it reads EISS. Ser384 provides a ligand contact to L-serine.

This sequence belongs to the class-II aminoacyl-tRNA synthetase family. Type-1 seryl-tRNA synthetase subfamily. As to quaternary structure, homodimer. The tRNA molecule binds across the dimer.

The protein resides in the cytoplasm. It carries out the reaction tRNA(Ser) + L-serine + ATP = L-seryl-tRNA(Ser) + AMP + diphosphate + H(+). It catalyses the reaction tRNA(Sec) + L-serine + ATP = L-seryl-tRNA(Sec) + AMP + diphosphate + H(+). It functions in the pathway aminoacyl-tRNA biosynthesis; selenocysteinyl-tRNA(Sec) biosynthesis; L-seryl-tRNA(Sec) from L-serine and tRNA(Sec): step 1/1. In terms of biological role, catalyzes the attachment of serine to tRNA(Ser). Is also able to aminoacylate tRNA(Sec) with serine, to form the misacylated tRNA L-seryl-tRNA(Sec), which will be further converted into selenocysteinyl-tRNA(Sec). The polypeptide is Serine--tRNA ligase (Rhizorhabdus wittichii (strain DSM 6014 / CCUG 31198 / JCM 15750 / NBRC 105917 / EY 4224 / RW1) (Sphingomonas wittichii)).